A 2742-amino-acid polypeptide reads, in one-letter code: Neurobeachin-like protein 2 (2742 aa).

2 disordered regions span residues 1312–1333 (ALSP…PSES) and 1356–1434 (LERA…QQTP). Positions 1384 to 1394 (TPSPLDGPRPF) are enriched in pro residues. A compositionally biased stretch (polar residues) spans 1421–1433 (GDDTSNTSNPQQT). A Phosphothreonine modification is found at T1855. Positions 1903 to 2028 (EKREKLVLSA…LRNQVYSLLL (126 aa)) constitute a BEACH-type PH domain. The region spanning 2041–2333 (RSPLEMLRAS…QLLKEPHPPR (293 aa)) is the BEACH domain. WD repeat units lie at residues 2374 to 2412 (LVLA…TWLP), 2436 to 2479 (KLLS…SLPR), 2482 to 2519 (LLNQ…VWRL), 2532 to 2570 (KPVQ…IHTV), 2577 to 2619 (AALR…TYSL), 2627 to 2662 (RLRA…ILHL), and 2670 to 2705 (PPLP…VGAG). 2 positions are modified to phosphoserine: S2727 and S2730.

The protein belongs to the WD repeat neurobeachin family.

The protein resides in the endoplasmic reticulum. Functionally, probably involved in thrombopoiesis. Plays a role in the development or secretion of alpha-granules, that contain several growth factors important for platelet biogenesis. The polypeptide is Neurobeachin-like protein 2 (Nbeal2) (Mus musculus (Mouse)).